The chain runs to 71 residues: Gas vesicle protein A (71 aa).

The alpha helix 1 stretch occupies residues 12–22 (LAEVIDRILDK). A beta-strand 1 region spans residues 26 to 34 (IDAWARVSL). A beta turn region spans residues 35 to 37 (VGI). The beta-strand 2 stretch occupies residues 38-46 (ELLAIEARV). The alpha helix 2 stretch occupies residues 51–70 (VETYLKYAEAVGLTQXAXXA).

The protein belongs to the gas vesicle GvpA family. As to quaternary structure, the gas vesicle shell is 2 nm thick and consists of a single layer of this protein. It forms helical ribs nearly perpendicular to the long axis of the vesicle.

It localises to the gas vesicle shell. Gas vesicles are hollow, gas filled proteinaceous nanostructures found in some microorganisms. During planktonic growth they allow positioning of the organism at a favorable depth for light or nutrient acquisition. GvpA forms the protein shell. The chain is Gas vesicle protein A from Microcystis sp. (strain BC 84/1).